The following is a 476-amino-acid chain: Doublesex and mab-3 related transcription factor 3 (476 aa).

The DM DNA-binding region spans 29 to 76; that stretch reads CARCRNHGVLSWLKGHKRYCRFKDCTCEKCILIIERQRVMAAQVALRR. Disordered stretches follow at residues 89 to 130 and 147 to 195; these read DSLR…RPAT and GTLP…SKNC. Residues 102 to 121 show a composition bias toward low complexity; it reads DAAATAATASQSSPASQASQ. Residues 176 to 185 show a composition bias toward basic and acidic residues; that stretch reads FSDKDTDQRS. A DMA domain is found at 255-290; sequence RPPLEVLKKIFPNQKPTVLELILKGCGGDLVSAVEV. Over residues 418–432 the composition is skewed to polar residues; the sequence is NSTSVFRSSPVLSSR. The disordered stretch occupies residues 418–476; the sequence is NSTSVFRSSPVLSSRTTEDPRISIPDDGCPIVAKQSIYTEDDYDERSDSSDSRILNTSS.

The protein belongs to the DMRT family.

The protein resides in the nucleus. In terms of biological role, probable transcription factor that plays a role in configuring the spinal circuits controlling stride in vertebrates. Involved in neuronal specification within a specific subdivision of spinal cord neurons and in the development of a coordinated locomotor network controlling limb movements. May regulate transcription during sexual development. The sequence is that of Doublesex and mab-3 related transcription factor 3 (Dmrt3) from Rattus norvegicus (Rat).